The following is a 176-amino-acid chain: Protein MAL2 (176 aa).

Over 1–34 (MSAGGASVPPPPNPAVSFPPPRVTLPAGPDILRT) the chain is Cytoplasmic. The 145-residue stretch at 31-175 (ILRTYSGAFV…SLGLALRRWR (145 aa)) folds into the MARVEL domain. A helical transmembrane segment spans residues 35 to 55 (YSGAFVCLEILFGGLVWILVA). Residues 56-66 (SSNVPLPLLQG) are Lumenal-facing. Residues 67-87 (WVMFVSVTAFFFSLLFLGMFL) form a helical membrane-spanning segment. Over 88–102 (SGMVAQIDANWNFLD) the chain is Cytoplasmic. The helical transmembrane segment at 103-123 (FAYHFTVFVFYFGAFLLEAAA) threads the bilayer. The Lumenal portion of the chain corresponds to 124–149 (TSLHDLHCNTTITGQPLLSDNQYNIN). N-linked (GlcNAc...) asparagine glycosylation is present at asparagine 132. Residues 150-170 (VAASIFAFMTTACYGCSLGLA) traverse the membrane as a helical segment. The Cytoplasmic portion of the chain corresponds to 171 to 176 (LRRWRP).

It belongs to the MAL family. In terms of assembly, interacts with TPD52L2. Predominantly expressed in kidney, lung, and liver. Also found in thyroid gland, stomach and, at lower levels in testis and small intestine.

The protein resides in the cell membrane. It localises to the apical cell membrane. Its subcellular location is the endomembrane system. The protein localises to the cytoplasm. It is found in the perinuclear region. Member of the machinery of polarized transport. Required for the indirect transcytotic route at the step of the egress of the transcytosing cargo from perinuclear endosomes in order for it to travel to the apical surface via a raft-dependent pathway. In Homo sapiens (Human), this protein is Protein MAL2 (MAL2).